The chain runs to 416 residues: Glutamyl-tRNA reductase (416 aa).

Substrate contacts are provided by residues 49-52, Ser105, 110-112, and Gln116; these read TCNR and EPQ. The Nucleophile role is filled by Cys50. Residue 185-190 coordinates NADP(+); sequence GAGETI.

It belongs to the glutamyl-tRNA reductase family. Homodimer.

It carries out the reaction (S)-4-amino-5-oxopentanoate + tRNA(Glu) + NADP(+) = L-glutamyl-tRNA(Glu) + NADPH + H(+). It participates in porphyrin-containing compound metabolism; protoporphyrin-IX biosynthesis; 5-aminolevulinate from L-glutamyl-tRNA(Glu): step 1/2. Catalyzes the NADPH-dependent reduction of glutamyl-tRNA(Glu) to glutamate 1-semialdehyde (GSA). The sequence is that of Glutamyl-tRNA reductase from Shewanella loihica (strain ATCC BAA-1088 / PV-4).